The following is a 2146-amino-acid chain: YLP motif-containing protein 1 (2146 aa).

Disordered stretches follow at residues 1 to 381 (MYPN…ARLK) and 562 to 880 (PPVM…FKMQ). Over residues 14–26 (YPPPPVPPPPPVA) the composition is skewed to pro residues. 2 stretches are compositionally biased toward low complexity: residues 27 to 48 (LPEASPGPGYSSSTTPAAPSSS) and 58 to 79 (LAQLQQLQQMHQKQMQCVLQPH). Composition is skewed to pro residues over residues 80-92 (HLPPPPLPPPPVM), 101-113 (QPPPPPMPPPPGP), 147-157 (PESPPVPPGSY), 165-175 (MPPPQPPPSYY), and 183-194 (YLPPAQPSPSQS). A compositionally biased stretch (low complexity) spans 195-237 (PPSQSYLAPTPSYSSSSSSSQSYLSHSQSYLPSSQASPSRPSQ). Composition is skewed to polar residues over residues 256 to 279 (NKTTVQQEPLESGAKNKSTEQQQA) and 286 to 308 (STMTPQEQQQYWYRQHLLSLQQR). Residues 309–319 (TKVHLPGHKKG) are compositionally biased toward basic residues. The span at 325 to 334 (DTPEPVKEEV) shows a compositional bias: basic and acidic residues. Composition is skewed to pro residues over residues 349–368 (EEPPLPPPNEEVPPPLPPEE), 562–579 (PPVMPPSLPTSVPPPGMP), and 586–642 (GPPP…PQGI). Positions 643–663 (PPQLTAAPVPPASSSQSSQVP) are enriched in low complexity. The span at 692-702 (AGPSEQVNSKA) shows a compositional bias: polar residues. Lys-735 is subject to N6-methyllysine. Position 756 is a phosphoserine (Ser-756). The segment covering 758–806 (RGPRFDGPRRFEDLGSRCEGPRPKGPRFEGNRPDGPRPRYEGHPAEGTK) has biased composition (basic and acidic residues). Arg-814 is modified (omega-N-methylarginine). 2 stretches are compositionally biased toward polar residues: residues 820-835 (FYITPSTSLSPRQSGP) and 868-880 (DTSSNQQKNFKMQ). Residue Ser-829 is modified to Phosphoserine. Arg-831 is subject to Omega-N-methylarginine. Lys-891 is covalently cross-linked (Glycyl lysine isopeptide (Lys-Gly) (interchain with G-Cter in SUMO2)). Disordered regions lie at residues 895–1211 (AAQS…GRNA) and 1243–1351 (NRED…DDRW). 2 stretches are compositionally biased toward polar residues: residues 896-909 (AQSNENLSDSQQEP) and 923-933 (NWDQNVQSMET). Residue Lys-983 forms a Glycyl lysine isopeptide (Lys-Gly) (interchain with G-Cter in SUMO1); alternate linkage. Lys-983 is covalently cross-linked (Glycyl lysine isopeptide (Lys-Gly) (interchain with G-Cter in SUMO2); alternate). 3 stretches are compositionally biased toward basic and acidic residues: residues 994–1012 (NNQDKGLPRPDNRDNRLEG), 1027–1036 (RMEDTRDKGL), and 1053–1093 (KQED…REKV). A Glycyl lysine isopeptide (Lys-Gly) (interchain with G-Cter in SUMO1); alternate cross-link involves residue Lys-1053. Residue Lys-1053 forms a Glycyl lysine isopeptide (Lys-Gly) (interchain with G-Cter in SUMO2); alternate linkage. 2 positions are modified to phosphoserine: Ser-1100 and Ser-1119. Composition is skewed to basic and acidic residues over residues 1129–1211 (GSRE…GRNA) and 1243–1264 (NREDRFSAPPSRSHDGDRRGPW). Acidic residues predominate over residues 1266–1276 (DDWERDQDMDE). Residues 1277-1328 (DYNREMERDMDRDVDRISRPMDMYDRSLDNEWDRDYGRPLDEQESQFRERDI) show a composition bias toward basic and acidic residues. The segment covering 1330 to 1342 (SLPPLPPLPPLPP) has biased composition (pro residues). A Phosphoserine modification is found at Ser-1402. Disordered regions lie at residues 1407–1438 (PSDVDRHSPMAEHMPSSHHSSEMMGSDASLDS), 1469–1573 (QKEQ…EQER), and 1602–1828 (IPSA…PPGR). The segment covering 1417–1430 (AEHMPSSHHSSEMM) has biased composition (low complexity). Basic and acidic residues predominate over residues 1469-1480 (QKEQLQKMKDFG). The span at 1505 to 1520 (MYPPPGSYRPPPPMGK) shows a compositional bias: pro residues. Residues 1521 to 1539 (PPGSIVRPSAPPARSSVPV) show a composition bias toward low complexity. Composition is skewed to pro residues over residues 1540-1562 (TRPPVPIPPPPPPPPLPPPPPVI) and 1606-1636 (PVLPPPPVHSSIPPPGPVPMGMPPMSKPPPV). Lys-1652 is covalently cross-linked (Glycyl lysine isopeptide (Lys-Gly) (interchain with G-Cter in SUMO2)). 4 stretches are compositionally biased toward basic and acidic residues: residues 1662–1696 (ITLRPDPLPERSTFETEHAGQRDRYDRERDREPYF), 1704–1774 (ADHR…DRPV), 1783–1793 (GERRTYPEERM), and 1809–1828 (RVEKKPESKNVDDILKPPGR). Lys-1710 participates in a covalent cross-link: Glycyl lysine isopeptide (Lys-Gly) (interchain with G-Cter in SUMO2). Residues 2096 to 2103 (KKRVRWAD) form an involved in interaction with PPP1CA region.

In terms of assembly, interacts with PPP1CA and NCOA5. Forms a complex with ILF2, ILF3, KHDRBS1, RBMX, NCOA5 and PPP1CA. In terms of tissue distribution, expressed in neuronal, neuroblastoma and embryonic kidney cell lines (at protein level).

Its subcellular location is the nucleus. The protein localises to the nucleus speckle. In terms of biological role, plays a role in the reduction of telomerase activity during differentiation of embryonic stem cells by binding to the core promoter of TERT and controlling its down-regulation. This Homo sapiens (Human) protein is YLP motif-containing protein 1 (YLPM1).